We begin with the raw amino-acid sequence, 305 residues long: Ribonuclease BN (305 aa).

Zn(2+) contacts are provided by H64, H66, D68, H69, H141, D212, and H270. D68 (proton acceptor) is an active-site residue.

The protein belongs to the RNase Z family. RNase BN subfamily. As to quaternary structure, homodimer. The cofactor is Zn(2+).

Zinc phosphodiesterase, which has both exoribonuclease and endoribonuclease activities. The polypeptide is Ribonuclease BN (Escherichia coli O7:K1 (strain IAI39 / ExPEC)).